Reading from the N-terminus, the 1046-residue chain is MSRFFIDRPIFAWVLAIIAMLAGALSLTKMPISQYPNIAAPAVSIQVVYPGASAKTVQDTVVQVIEQQLNGLDGFRYMAAESASDGSMNIIVTFEQGTNPDIAQVQVQNKLQLATPRLPEEVQRQGLRVVKYQMNFFMVVGLVDKTGKMTNFDLGNLIASQLQDPISRINGVGDFLLFGSPYAMRIWLDPGKLNSYQLTPGDVAQAIREQNVQVSSGQLGGLPTRSGVQLNATVVGKTRMTTPAEFEEILVKVKADGSQVRVKDLGRVVLASENFAISAKYRGQDSAGLGLRLASGGNLLETVKAVKAELEKQKAYLPEGVEVIYPYDTSPVVEASIDSVVHTILEAVVLVFLVMFLFLQSLRATIIPTLAVPVVLLAAFALLPYFGISINVLTMYAMVLAIGLLVDDAIVVVENVERLMHDEGLSPLEATRKSMGQISGALVGIGMVLSAVFVPMAFFGGSAGIIYKQFAVTIVICMSLSVLVALIFTPALCATILKAPENDAHHEKKGFFGWFNRSFDRNSARFERGVGGILKHRGRYLLIFALITAGTGYLFTQIPKAFLPSEDQGLMMTEVRMPLNASAERTEVVLQEVKDYLLKEEGQLVDHVMTVNGFNFAGRGQNSGLVLVVLKDWAARQAAGEDVLSVAERANARFARIKDATVMAFVPPAVLEMGNAMGFDLYLQDNLGLGHESLMAARNQFLELAAENPSLRAVRPNGKDDEPQFQVKIDDEKARALQVSIASINDTMSAAWGSMYVNDFIDLGRVKRVYIQGVDSSRIAPEDFDKWYVRNALGEMVPFSAFATGEWIHGSPKLERYGGISAVNILGEPAPGFSTGDAMIAIAQIMQQLPSGIGLSYNGLSYEEIRTGDQAPMLYALTVLIVFLCLAALYESWSVPMSVILVVPLGIFGAVLATLWRGLEADVYFQVGLMTTVGLSAKNAILIIEFAKELYEKEGVPLVKAAIEAARLRLRPIIMTSLAFTFGVLPMARATGAGAGSQHSIATGVVGGMITATVLAVFFVPLFYVVVVKVFERNKKPAALAEEELA.

The next 12 helical transmembrane spans lie at 10-30, 339-359, 370-390, 392-412, 440-460, 470-490, 542-562, 871-891, 895-915, 927-947, 973-993, and 1008-1028; these read IFAWVLAIIAMLAGALSLTKM, SVVHTILEAVVLVFLVMFLFL, LAVPVVLLAAFALLPYFGISI, VLTMYAMVLAIGLLVDDAIVV, GALVGIGMVLSAVFVPMAFFG, FAVTIVICMSLSVLVALIFTP, LIFALITAGTGYLFTQIPKAF, APMLYALTVLIVFLCLAALYE, VPMSVILVVPLGIFGAVLATL, VGLMTTVGLSAKNAILIIEFA, IIMTSLAFTFGVLPMARATGA, and GMITATVLAVFFVPLFYVVVV.

This sequence belongs to the resistance-nodulation-cell division (RND) (TC 2.A.6) family.

It localises to the cell inner membrane. Functionally, the inner membrane transporter component of an inducible organic solvent efflux pump. Involved in export of toluene and styrene but not of m-xylene, propylbenzene or ethylbenzene. Is not involved in antibiotic or AMP efflux. The chain is Toluene efflux pump membrane transporter TtgE (ttgE) from Pseudomonas putida (strain DOT-T1E).